The chain runs to 123 residues: Large ribosomal subunit protein bL12 (123 aa).

It belongs to the bacterial ribosomal protein bL12 family. As to quaternary structure, homodimer. Part of the ribosomal stalk of the 50S ribosomal subunit. Forms a multimeric L10(L12)X complex, where L10 forms an elongated spine to which 2 to 4 L12 dimers bind in a sequential fashion. Binds GTP-bound translation factors.

Functionally, forms part of the ribosomal stalk which helps the ribosome interact with GTP-bound translation factors. Is thus essential for accurate translation. The chain is Large ribosomal subunit protein bL12 from Rhodopseudomonas palustris (strain BisA53).